The chain runs to 154 residues: Small ribosomal subunit protein uS15 (154 aa).

The span at 1–11 shows a compositional bias: basic residues; the sequence is MSRLHAHKRYH. Positions 1-24 are disordered; the sequence is MSRLHAHKRYHGQSGSKRPLRTTK.

This sequence belongs to the universal ribosomal protein uS15 family. As to quaternary structure, part of the 30S ribosomal subunit.

This chain is Small ribosomal subunit protein uS15, found in Nanoarchaeum equitans (strain Kin4-M).